We begin with the raw amino-acid sequence, 731 residues long: Alpha-xylosidase (731 aa).

Catalysis depends on residues Asp353 and Glu356. The active-site Proton donor is Asp428.

Belongs to the glycosyl hydrolase 31 family. Monomer.

The enzyme catalyses Hydrolysis of terminal, non-reducing alpha-D-xylose residues with release of alpha-D-xylose.. Its function is as follows. Catalyzes the liberation of alpha-xylose from the non-reducing terminal glucose of xyloglucan oligosaccharides. Has high hydrolytic activity on the disaccharide isoprimeverose. Follows a retaining mechanism of substrate hydrolysis. This Saccharolobus solfataricus (strain ATCC 35092 / DSM 1617 / JCM 11322 / P2) (Sulfolobus solfataricus) protein is Alpha-xylosidase (xylS).